A 167-amino-acid polypeptide reads, in one-letter code: Lipoprotein signal peptidase (167 aa).

Transmembrane regions (helical) follow at residues 8 to 28, 46 to 66, 68 to 88, and 101 to 121; these read TFLT…VVLL, WGHF…FGLF, QYKI…ALFL, and IALT…LLHG. Catalysis depends on residues Asp125 and Asp143. Residues 139–159 form a helical membrane-spanning segment; that stretch reads FNLADAFISIGTLLLIGHLYF.

It belongs to the peptidase A8 family.

Its subcellular location is the cell inner membrane. The catalysed reaction is Release of signal peptides from bacterial membrane prolipoproteins. Hydrolyzes -Xaa-Yaa-Zaa-|-(S,diacylglyceryl)Cys-, in which Xaa is hydrophobic (preferably Leu), and Yaa (Ala or Ser) and Zaa (Gly or Ala) have small, neutral side chains.. It participates in protein modification; lipoprotein biosynthesis (signal peptide cleavage). Its function is as follows. This protein specifically catalyzes the removal of signal peptides from prolipoproteins. This Chlamydia trachomatis serovar L2b (strain UCH-1/proctitis) protein is Lipoprotein signal peptidase.